The primary structure comprises 732 residues: Phosphoribosylformylglycinamidine synthase subunit PurL (732 aa).

Residue histidine 32 is part of the active site. Tyrosine 35 serves as a coordination point for ATP. Glutamate 81 contributes to the Mg(2+) binding site. Residues 82–85 and arginine 104 contribute to the substrate site; that span reads SHNH. Residue histidine 83 is the Proton acceptor of the active site. Residue aspartate 105 participates in Mg(2+) binding. Glutamine 230 contributes to the substrate binding site. Aspartate 258 contributes to the Mg(2+) binding site. 302 to 304 serves as a coordination point for substrate; the sequence is ESQ. Aspartate 485 and glycine 522 together coordinate ATP. Asparagine 523 provides a ligand contact to Mg(2+). Serine 525 contributes to the substrate binding site.

Belongs to the FGAMS family. As to quaternary structure, monomer. Part of the FGAM synthase complex composed of 1 PurL, 1 PurQ and 2 PurS subunits.

It is found in the cytoplasm. The enzyme catalyses N(2)-formyl-N(1)-(5-phospho-beta-D-ribosyl)glycinamide + L-glutamine + ATP + H2O = 2-formamido-N(1)-(5-O-phospho-beta-D-ribosyl)acetamidine + L-glutamate + ADP + phosphate + H(+). Its pathway is purine metabolism; IMP biosynthesis via de novo pathway; 5-amino-1-(5-phospho-D-ribosyl)imidazole from N(2)-formyl-N(1)-(5-phospho-D-ribosyl)glycinamide: step 1/2. Its function is as follows. Part of the phosphoribosylformylglycinamidine synthase complex involved in the purines biosynthetic pathway. Catalyzes the ATP-dependent conversion of formylglycinamide ribonucleotide (FGAR) and glutamine to yield formylglycinamidine ribonucleotide (FGAM) and glutamate. The FGAM synthase complex is composed of three subunits. PurQ produces an ammonia molecule by converting glutamine to glutamate. PurL transfers the ammonia molecule to FGAR to form FGAM in an ATP-dependent manner. PurS interacts with PurQ and PurL and is thought to assist in the transfer of the ammonia molecule from PurQ to PurL. This is Phosphoribosylformylglycinamidine synthase subunit PurL from Methanococcus aeolicus (strain ATCC BAA-1280 / DSM 17508 / OCM 812 / Nankai-3).